Here is a 379-residue protein sequence, read N- to C-terminus: MTSETTVNLLDFDAEGLVAYCGSLGEKPFRAKQLQRWIHQYNAGDFDGMTDLAKSLREKLKGRASIGMPEIASDHVSTDGTRKWLIDVGNGNAVETVFIPEETRGTLCVSSQAGCAVNCRFCSTGKQGFSRNLSTAEIIGQLRMAEFALRASLGRAPGPNGKAERVVTNVVMMGMGEPLLNYSAVVPAMRLMLDDNAYGLSRRRVTLSTSGVVPMMDRLGAELPVALAVSLHAPNDPLRDELVPLNKKYPLRELMAACQRYLKVAPRDFITFEYCMLDGVNDTEAHARELLAVTRDVPCKFNLIPFNPFPESGLIRSKPEQIKRFAQVLIDAGVVTTVRKTRGDDIDAACGQLAGAVKDRTRLAERTGAAGKIIEVRAI.

Glu95 functions as the Proton acceptor in the catalytic mechanism. One can recognise a Radical SAM core domain in the interval Glu101–Asp345. The cysteines at positions 108 and 350 are disulfide-linked. Residues Cys115, Cys119, and Cys122 each coordinate [4Fe-4S] cluster. Residues Gly176–Glu177, Ser208, Ser230–His232, and Asn307 each bind S-adenosyl-L-methionine. The active-site S-methylcysteine intermediate is Cys350.

Belongs to the radical SAM superfamily. RlmN family. [4Fe-4S] cluster is required as a cofactor.

The protein localises to the cytoplasm. It catalyses the reaction adenosine(2503) in 23S rRNA + 2 reduced [2Fe-2S]-[ferredoxin] + 2 S-adenosyl-L-methionine = 2-methyladenosine(2503) in 23S rRNA + 5'-deoxyadenosine + L-methionine + 2 oxidized [2Fe-2S]-[ferredoxin] + S-adenosyl-L-homocysteine. It carries out the reaction adenosine(37) in tRNA + 2 reduced [2Fe-2S]-[ferredoxin] + 2 S-adenosyl-L-methionine = 2-methyladenosine(37) in tRNA + 5'-deoxyadenosine + L-methionine + 2 oxidized [2Fe-2S]-[ferredoxin] + S-adenosyl-L-homocysteine. Specifically methylates position 2 of adenine 2503 in 23S rRNA and position 2 of adenine 37 in tRNAs. m2A2503 modification seems to play a crucial role in the proofreading step occurring at the peptidyl transferase center and thus would serve to optimize ribosomal fidelity. The polypeptide is Dual-specificity RNA methyltransferase RlmN (Burkholderia lata (strain ATCC 17760 / DSM 23089 / LMG 22485 / NCIMB 9086 / R18194 / 383)).